Consider the following 287-residue polypeptide: Glutamate racemase (287 aa).

Positions 1-15 (MATKPQDANTTSREA) are enriched in polar residues. Residues 1–25 (MATKPQDANTTSREAITSKADSPPR) form a disordered region. Substrate contacts are provided by residues 32 to 33 (DS) and 64 to 65 (YG). The active-site Proton donor/acceptor is the C96. 97 to 98 (NT) contacts substrate. Residue C208 is the Proton donor/acceptor of the active site. 209–210 (TH) is a binding site for substrate.

It belongs to the aspartate/glutamate racemases family.

It catalyses the reaction L-glutamate = D-glutamate. The protein operates within cell wall biogenesis; peptidoglycan biosynthesis. Its function is as follows. Provides the (R)-glutamate required for cell wall biosynthesis. This Yersinia pseudotuberculosis serotype IB (strain PB1/+) protein is Glutamate racemase.